We begin with the raw amino-acid sequence, 313 residues long: Ribosomal RNA small subunit methyltransferase H (313 aa).

S-adenosyl-L-methionine is bound by residues 37–39 (GGH), Asp57, Phe82, Asp104, and Gln111.

This sequence belongs to the methyltransferase superfamily. RsmH family.

Its subcellular location is the cytoplasm. It catalyses the reaction cytidine(1402) in 16S rRNA + S-adenosyl-L-methionine = N(4)-methylcytidine(1402) in 16S rRNA + S-adenosyl-L-homocysteine + H(+). Its function is as follows. Specifically methylates the N4 position of cytidine in position 1402 (C1402) of 16S rRNA. In Alteromonas mediterranea (strain DSM 17117 / CIP 110805 / LMG 28347 / Deep ecotype), this protein is Ribosomal RNA small subunit methyltransferase H.